The sequence spans 63 residues: MLGQSIRRFTTSVVRRSHYEEGPGKNLPFSVENKWSLLAKMCLYFGSAFATPFLIVRHQLLKT.

The transit peptide at 1–16 (MLGQSIRRFTTSVVRR) directs the protein to the mitochondrion. At 17–33 (SHYEEGPGKNLPFSVEN) the chain is on the mitochondrial matrix side. Residue lysine 25 is modified to N6-acetyllysine; alternate. Position 25 is an N6-succinyllysine; alternate (lysine 25). Residues 34 to 60 (KWSLLAKMCLYFGSAFATPFLIVRHQL) form a helical membrane-spanning segment. Topologically, residues 61–63 (LKT) are mitochondrial intermembrane.

This sequence belongs to the cytochrome c oxidase VIIc family. As to quaternary structure, component of the cytochrome c oxidase (complex IV, CIV), a multisubunit enzyme composed of 14 subunits. The complex is composed of a catalytic core of 3 subunits MT-CO1, MT-CO2 and MT-CO3, encoded in the mitochondrial DNA, and 11 supernumerary subunits COX4I, COX5A, COX5B, COX6A, COX6B, COX6C, COX7A, COX7B, COX7C, COX8 and NDUFA4, which are encoded in the nuclear genome. The complex exists as a monomer or a dimer and forms supercomplexes (SCs) in the inner mitochondrial membrane with NADH-ubiquinone oxidoreductase (complex I, CI) and ubiquinol-cytochrome c oxidoreductase (cytochrome b-c1 complex, complex III, CIII), resulting in different assemblies (supercomplex SCI(1)III(2)IV(1) and megacomplex MCI(2)III(2)IV(2)). Interacts with RAB5IF.

It is found in the mitochondrion inner membrane. It participates in energy metabolism; oxidative phosphorylation. Component of the cytochrome c oxidase, the last enzyme in the mitochondrial electron transport chain which drives oxidative phosphorylation. The respiratory chain contains 3 multisubunit complexes succinate dehydrogenase (complex II, CII), ubiquinol-cytochrome c oxidoreductase (cytochrome b-c1 complex, complex III, CIII) and cytochrome c oxidase (complex IV, CIV), that cooperate to transfer electrons derived from NADH and succinate to molecular oxygen, creating an electrochemical gradient over the inner membrane that drives transmembrane transport and the ATP synthase. Cytochrome c oxidase is the component of the respiratory chain that catalyzes the reduction of oxygen to water. Electrons originating from reduced cytochrome c in the intermembrane space (IMS) are transferred via the dinuclear copper A center (CU(A)) of subunit 2 and heme A of subunit 1 to the active site in subunit 1, a binuclear center (BNC) formed by heme A3 and copper B (CU(B)). The BNC reduces molecular oxygen to 2 water molecules using 4 electrons from cytochrome c in the IMS and 4 protons from the mitochondrial matrix. The chain is Cytochrome c oxidase subunit 7C, mitochondrial (COX7C) from Pongo pygmaeus (Bornean orangutan).